A 271-amino-acid polypeptide reads, in one-letter code: Non-homologous end joining protein Ku (271 aa).

In terms of domain architecture, Ku spans 12-194; sequence KLSLVTCPVV…DQKPVPELLS (183 aa). The segment at 225–249 is disordered; sequence EAKKTPPAKKTKAEEKTGKGSAESN.

The protein belongs to the prokaryotic Ku family. Homodimer. Interacts with LigD.

Functionally, with LigD forms a non-homologous end joining (NHEJ) DNA repair enzyme, which repairs dsDNA breaks with reduced fidelity. Binds linear dsDNA with 5'- and 3'- overhangs but not closed circular dsDNA nor ssDNA. Recruits and stimulates the ligase activity of LigD. The protein is Non-homologous end joining protein Ku of Methylocella silvestris (strain DSM 15510 / CIP 108128 / LMG 27833 / NCIMB 13906 / BL2).